Here is an 89-residue protein sequence, read N- to C-terminus: Small ribosomal subunit protein uS15 (89 aa).

The protein belongs to the universal ribosomal protein uS15 family. As to quaternary structure, part of the 30S ribosomal subunit. Forms a bridge to the 50S subunit in the 70S ribosome, contacting the 23S rRNA.

One of the primary rRNA binding proteins, it binds directly to 16S rRNA where it helps nucleate assembly of the platform of the 30S subunit by binding and bridging several RNA helices of the 16S rRNA. Functionally, forms an intersubunit bridge (bridge B4) with the 23S rRNA of the 50S subunit in the ribosome. The chain is Small ribosomal subunit protein uS15 from Mycobacteroides abscessus (strain ATCC 19977 / DSM 44196 / CCUG 20993 / CIP 104536 / JCM 13569 / NCTC 13031 / TMC 1543 / L948) (Mycobacterium abscessus).